The sequence spans 296 residues: Protoheme IX farnesyltransferase (296 aa).

The Cytoplasmic portion of the chain corresponds to 1 to 9; the sequence is MMFKQYLQV. Residues 10 to 28 traverse the membrane as a helical segment; the sequence is TKPGIIFGNLISVIGGFLL. The Periplasmic portion of the chain corresponds to 29 to 37; that stretch reads ASKGSIDYP. The helical transmembrane segment at 38 to 56 threads the bilayer; sequence LFIYTLVGVSLVVASGCVF. The Cytoplasmic segment spans residues 57-78; it reads NNYIDRDIDRKMERTKNRVLVK. The helical transmembrane segment at 79–97 threads the bilayer; that stretch reads GLISPGVSLVYATLLGIAG. Over 98–107 the chain is Periplasmic; the sequence is FMLLWFGANP. A helical membrane pass occupies residues 108–126; that stretch reads LACWLGVMGFVVYVGVYSL. Topologically, residues 127–197 are cytoplasmic; sequence YMKRHSVYGT…YQAANIPVLP (71 aa). A helical membrane pass occupies residues 198–216; sequence VIKGISVAKNHITLYIIAF. The Periplasmic portion of the chain corresponds to 217–228; sequence AVATLMLTLGGY. The helical transmembrane segment at 229–247 threads the bilayer; the sequence is AGYKYLVVAAAVSVWWLGM. The Cytoplasmic portion of the chain corresponds to 248–268; it reads ALRGYKVEDDKVWARKLFGFS. A helical transmembrane segment spans residues 269–287; it reads IIAITALSIMMSVDFMVPN. Residues 288 to 296 are Periplasmic-facing; the sequence is SQNLLTYVW.

The protein belongs to the UbiA prenyltransferase family. Protoheme IX farnesyltransferase subfamily.

The protein resides in the cell inner membrane. The enzyme catalyses heme b + (2E,6E)-farnesyl diphosphate + H2O = Fe(II)-heme o + diphosphate. Its pathway is porphyrin-containing compound metabolism; heme O biosynthesis; heme O from protoheme: step 1/1. Converts heme B (protoheme IX) to heme O by substitution of the vinyl group on carbon 2 of heme B porphyrin ring with a hydroxyethyl farnesyl side group. The protein is Protoheme IX farnesyltransferase of Salmonella typhi.